We begin with the raw amino-acid sequence, 154 residues long: Large ribosomal subunit protein uL13 (154 aa).

The segment at 132–154 (PHEAQQPEVLDVKSMNAKNTRSA) is disordered.

It belongs to the universal ribosomal protein uL13 family. As to quaternary structure, part of the 50S ribosomal subunit.

This protein is one of the early assembly proteins of the 50S ribosomal subunit, although it is not seen to bind rRNA by itself. It is important during the early stages of 50S assembly. The chain is Large ribosomal subunit protein uL13 from Paracoccus denitrificans (strain Pd 1222).